Reading from the N-terminus, the 160-residue chain is Eukaryotic translation initiation factor 5A (160 aa).

The span at 1 to 12 (MSDEEHHFESKA) shows a compositional bias: basic and acidic residues. A disordered region spans residues 1-21 (MSDEEHHFESKADAGASKTFP). The residue at position 52 (lysine 52) is a Hypusine.

It belongs to the eIF-5A family. Post-translationally, lys-53 undergoes hypusination, a unique post-translational modification that consists in the addition of a butylamino group from spermidine to lysine side chain, leading to the formation of the unusual amino acid hypusine. eIF-5As are the only known proteins to undergo this modification, which is essential for their function.

Functionally, translation factor that promotes translation elongation and termination, particularly upon ribosome stalling at specific amino acid sequence contexts. Binds between the exit (E) and peptidyl (P) site of the ribosome and promotes rescue of stalled ribosome: specifically required for efficient translation of polyproline-containing peptides as well as other motifs that stall the ribosome. Acts as a ribosome quality control (RQC) cofactor by joining the RQC complex to facilitate peptidyl transfer during CAT tailing step. This chain is Eukaryotic translation initiation factor 5A, found in Manihot esculenta (Cassava).